A 283-amino-acid chain; its full sequence is 1-acyl-sn-glycerol-3-phosphate acyltransferase alpha (283 aa).

Positions 1–26 (MDLWPGAWMLLLLLFLLLLFLLPTLW) are cleaved as a signal peptide. Over 27–37 (FCSPSAKYFFK) the chain is Lumenal. Residues 38–58 (MAFYNGWILFLAVLAIPVCAV) traverse the membrane as a helical segment. At 59-127 (RGRNVENMKI…PGRCVPIAKR (69 aa)) the chain is on the cytoplasmic side. The HXXXXD motif signature appears at 104-109 (HQSSLD). The helical transmembrane segment at 128–148 (ELLWAGSAGLACWLAGVIFID) threads the bilayer. Residues 149–283 (RKRTGDAISV…DYLKKPGGGG (135 aa)) lie on the Lumenal side of the membrane. An EGTR motif motif is present at residues 178-181 (EGTR).

Belongs to the 1-acyl-sn-glycerol-3-phosphate acyltransferase family. As to expression, widely expressed. Expressed in adipose tissue and at high levels in testis and pancreas. Expressed at lower levels in tissues such as heart, brain, placenta, kidney, lung, spleen, thymus, prostate, ovary, intestine, colon, leukocyte and liver.

The protein localises to the endoplasmic reticulum membrane. It carries out the reaction a 1-acyl-sn-glycero-3-phosphate + an acyl-CoA = a 1,2-diacyl-sn-glycero-3-phosphate + CoA. The catalysed reaction is 1-(9Z-octadecenoyl)-sn-glycero-3-phosphate + (9Z)-octadecenoyl-CoA = 1,2-di-(9Z-octadecenoyl)-sn-glycero-3-phosphate + CoA. The enzyme catalyses 1-(9Z-octadecenoyl)-sn-glycero-3-phosphate + hexadecanoyl-CoA = 1-(9Z)-octadecenoyl-2-hexadecanoyl-sn-glycero-3-phosphate + CoA. It catalyses the reaction heptadecanoyl-CoA + 1-(9Z-octadecenoyl)-sn-glycero-3-phosphate = 1-(9Z)-octadecenoyl-2-heptadecanoyl-sn-glycero-3-phosphate + CoA. It carries out the reaction 1-(9Z-octadecenoyl)-sn-glycero-3-phosphate + octadecanoyl-CoA = 1-(9Z-octadecenoyl)-2-octadecanoyl-sn-glycero-3-phosphate + CoA. The catalysed reaction is 1-(9Z-octadecenoyl)-sn-glycero-3-phosphate + (9Z,12Z)-octadecadienoyl-CoA = 1-(9Z)-octadecenoyl-2-(9Z,12Z)-octadecadienoyl-sn-glycero-3-phosphate + CoA. The enzyme catalyses 1-(9Z-octadecenoyl)-sn-glycero-3-phosphate + tetradecanoyl-CoA = 1-(9Z)-octadecenoyl-2-tetradecanoyl-sn-glycero-3-phosphate + CoA. It catalyses the reaction pentadecanoyl-CoA + 1-(9Z-octadecenoyl)-sn-glycero-3-phosphate = 1-(9Z)-octadecenoyl-2-pentadecanoyl-sn-glycero-3-phosphate + CoA. It carries out the reaction 1-hexadecanoyl-sn-glycero-3-phosphate + (9Z)-octadecenoyl-CoA = 1-hexadecanoyl-2-(9Z-octadecenoyl)-sn-glycero-3-phosphate + CoA. The catalysed reaction is 1-(9Z,12Z,15Z)-octadecatrienoyl-sn-glycero-3-phosphate + (9Z)-octadecenoyl-CoA = 1-(9Z,12Z,15Z)-octadecatrienoyl-2-(9Z)-octadecenoyl-sn-glycero-3-phosphate + CoA. The enzyme catalyses 1-(6Z,9Z,12Z-octadecatrienoyl)-sn-glycero-3-phosphate + (9Z)-octadecenoyl-CoA = (6Z,9Z,12Z)-octadecatrienoyl-2-(9Z)-octadecenoyl-sn-glycero-3-phosphate + CoA. It catalyses the reaction 1-eicosanoyl-sn-glycero-3-phosphate + (9Z)-octadecenoyl-CoA = 1-eicosanoyl-2-(9Z)-octadecenoyl-sn-glycero-3-phosphate + CoA. It carries out the reaction 1-tetradecanoyl-sn-glycerol 3-phosphate + (9Z)-octadecenoyl-CoA = 1-tetradecanoyl-2-(9Z)-octadecenoyl-sn-glycero-3-phosphate + CoA. The catalysed reaction is 1-(9Z-octadecenoyl)-sn-glycero-3-phosphate + (5Z,8Z,11Z,14Z)-eicosatetraenoyl-CoA = 1-(9Z)-octadecenoyl-2-(5Z,8Z,11Z,14Z)-eicosatetraenoyl-sn-glycero-3-phosphate + CoA. The enzyme catalyses 1-(9Z-octadecenoyl)-sn-glycero-3-phosphate + dodecanoyl-CoA = 1-(9Z)-octadecenoyl-2-dodecanoyl-sn-glycero-3-phosphate + CoA. It catalyses the reaction (6Z)-octadecenoyl-CoA + 1-(9Z-octadecenoyl)-sn-glycero-3-phosphate = 1-(9Z)-octadecenoyl-2-(6Z)-octadecenoyl-sn-glycero-3-phosphate + CoA. It carries out the reaction (11Z)-octadecenoyl-CoA + 1-(9Z-octadecenoyl)-sn-glycero-3-phosphate = 1-(9Z)-octadecenoyl-2-(11Z)-octadecenoyl-sn-glycero-3-phosphate + CoA. The catalysed reaction is (9Z)-hexadecenoyl-CoA + 1-(9Z-octadecenoyl)-sn-glycero-3-phosphate = 1-(9Z-octadecenoyl)-2-(9Z-hexadecenoyl)-sn-glycero-3-phosphate + CoA. Its pathway is phospholipid metabolism; CDP-diacylglycerol biosynthesis; CDP-diacylglycerol from sn-glycerol 3-phosphate: step 2/3. Functionally, converts 1-acyl-sn-glycerol-3-phosphate (lysophosphatidic acid or LPA) into 1,2-diacyl-sn-glycerol-3-phosphate (phosphatidic acid or PA) by incorporating an acyl moiety at the sn-2 position of the glycerol backbone. In Homo sapiens (Human), this protein is 1-acyl-sn-glycerol-3-phosphate acyltransferase alpha (AGPAT1).